The following is a 152-amino-acid chain: Ribosome maturation factor RimP (152 aa).

This sequence belongs to the RimP family.

It is found in the cytoplasm. In terms of biological role, required for maturation of 30S ribosomal subunits. The chain is Ribosome maturation factor RimP from Pectobacterium atrosepticum (strain SCRI 1043 / ATCC BAA-672) (Erwinia carotovora subsp. atroseptica).